The sequence spans 716 residues: Probable glutamate--tRNA ligase, cytoplasmic (716 aa).

A Phosphoserine modification is found at Ser190. An L-glutamate-binding site is contributed by 210–212 (RFP). The 'HIGH' region motif lies at 215 to 224 (PSGYLHIGHA). His220 contributes to the ATP binding site. L-glutamate-binding positions include Asp246, 386 to 390 (YDFAC), and Arg404. ATP is bound by residues Glu407 and 441–445 (LLSKR). The 'KMSKS' region motif lies at 441–445 (LLSKR).

This sequence belongs to the class-I aminoacyl-tRNA synthetase family. Glutamate--tRNA ligase type 2 subfamily. Component of a yeast aminoacyl-tRNA synthase (aaRS) complex formed by methionyl-tRNA synthase, glutamyl-tRNA synthase and the tRNA aminoacylation cofactor arc1 in a stoichiometric complex. Interacts with arc1/SPAC30C2.04.

It is found in the cytoplasm. The protein localises to the nucleus. It carries out the reaction tRNA(Glu) + L-glutamate + ATP = L-glutamyl-tRNA(Glu) + AMP + diphosphate. In terms of biological role, catalyzes the attachment of glutamate to tRNA(Glu) in a two-step reaction: glutamate is first activated by ATP to form Glu-AMP and then transferred to the acceptor end of tRNA(Glu). The polypeptide is Probable glutamate--tRNA ligase, cytoplasmic (gus1) (Schizosaccharomyces pombe (strain 972 / ATCC 24843) (Fission yeast)).